The chain runs to 372 residues: MLRSMWNFLKRHKKKCIFLGTVLGGVYILGKYGQKKIREIQEREAAEYIAQARRQYHFESNQRTCNMTVLSMLPTLREALMQQLNSESLTALLKSRPSNKLEIWEDLKIISFTRSIVAVYSTCMLVVLLRVQLNIIGGYIYLDNATVGKNGTTVLAPPDVQQQYLSSIQHLLGDGLTELVTVIKQAVQRILGSVSLKHSLSLLDLEQKLKEIRILVEQHQSSWNDKDVSRSSLCQYMMPDEETPLAAQAYGLSHRDITTIKLLNETRDMLESPDFSTVLNTCLNRGFSRLLDNMAEFFRPTEQDLQHGNSINSLSSVSLPLAKIIPIVNGQIHSVCSETPSHFVQDLLMMEQVKDFAANVYEAFSTPQQLEK.

Over 1–15 (MLRSMWNFLKRHKKK) the chain is Cytoplasmic. The segment at 1–45 (MLRSMWNFLKRHKKKCIFLGTVLGGVYILGKYGQKKIREIQEREA) is targeting to peroxisomes. Residues 16–36 (CIFLGTVLGGVYILGKYGQKK) traverse the membrane as a helical segment. The Peroxisomal portion of the chain corresponds to 37 to 116 (IREIQEREAA…LKIISFTRSI (80 aa)). Residues 117-140 (VAVYSTCMLVVLLRVQLNIIGGYI) traverse the membrane as a helical segment. The interaction with PEX19 stretch occupies residues 120–136 (YSTCMLVVLLRVQLNII). Residues 141-372 (YLDNATVGKN…AFSTPQQLEK (232 aa)) lie on the Cytoplasmic side of the membrane.

Belongs to the peroxin-3 family. In terms of assembly, interacts with PEX19. In terms of tissue distribution, identified in all tissues analyzed, with the strongest expression in liver and in testis.

The protein localises to the peroxisome membrane. Involved in peroxisome biosynthesis and integrity. Assembles membrane vesicles before the matrix proteins are translocated. As a docking factor for PEX19, is necessary for the import of peroxisomal membrane proteins in the peroxisomes. The chain is Peroxisomal biogenesis factor 3 (Pex3) from Mus musculus (Mouse).